Here is a 78-residue protein sequence, read N- to C-terminus: MAREIKDIKEFVELARRSDIKSAIVKVNAKVNANGKKFKQTKFKVRGSRYQYTLVVNDASKAKKLQQSLPPTLKITNL.

This sequence belongs to the eukaryotic ribosomal protein eL38 family. Component of the large ribosomal subunit. Mature ribosomes consist of a small (40S) and a large (60S) subunit. The 40S subunit contains about 32 different proteins and 1 molecule of RNA (18S). The 60S subunit contains 45 different proteins and 3 molecules of RNA (25S, 5.8S and 5S).

Its subcellular location is the cytoplasm. Component of the ribosome, a large ribonucleoprotein complex responsible for the synthesis of proteins in the cell. The small ribosomal subunit (SSU) binds messenger RNAs (mRNAs) and translates the encoded message by selecting cognate aminoacyl-transfer RNA (tRNA) molecules. The large subunit (LSU) contains the ribosomal catalytic site termed the peptidyl transferase center (PTC), which catalyzes the formation of peptide bonds, thereby polymerizing the amino acids delivered by tRNAs into a polypeptide chain. The nascent polypeptides leave the ribosome through a tunnel in the LSU and interact with protein factors that function in enzymatic processing, targeting, and the membrane insertion of nascent chains at the exit of the ribosomal tunnel. This chain is Large ribosomal subunit protein eL38, found in Candida albicans (strain SC5314 / ATCC MYA-2876) (Yeast).